We begin with the raw amino-acid sequence, 140 residues long: Acyl carrier protein 1, chloroplastic (140 aa).

The N-terminal 56 residues, 1-56 (MASAAAGASICIKSASFSPLAPGRISSLRSVSLPVSRKSFPSLKSSKSSFALRVSC), are a transit peptide targeting the chloroplast. The Carrier domain maps to 60 to 135 (PETVAKVCGI…DAADLIEKLM (76 aa)). Serine 95 is subject to O-(pantetheine 4'-phosphoryl)serine.

Belongs to the acyl carrier protein (ACP) family. Post-translationally, 4'-phosphopantetheine is transferred from CoA to a specific serine of apo-ACP by acpS. This modification is essential for activity because fatty acids are bound in thioester linkage to the sulfhydryl of the prosthetic group.

The protein localises to the plastid. It localises to the chloroplast. It participates in lipid metabolism; fatty acid biosynthesis. Its function is as follows. Carrier of the growing fatty acid chain in fatty acid biosynthesis. The sequence is that of Acyl carrier protein 1, chloroplastic (ACL1.1) from Cuphea lanceolata (Cigar flower).